We begin with the raw amino-acid sequence, 444 residues long: UDP-N-acetylmuramate--L-alanine ligase (444 aa).

110–116 (GAHGKTS) provides a ligand contact to ATP.

It belongs to the MurCDEF family.

Its subcellular location is the cytoplasm. The catalysed reaction is UDP-N-acetyl-alpha-D-muramate + L-alanine + ATP = UDP-N-acetyl-alpha-D-muramoyl-L-alanine + ADP + phosphate + H(+). It participates in cell wall biogenesis; peptidoglycan biosynthesis. Functionally, cell wall formation. This is UDP-N-acetylmuramate--L-alanine ligase from Streptococcus pneumoniae (strain JJA).